The following is a 277-amino-acid chain: 4-hydroxy-3-prenylphenylpyruvate oxygenase/4-hydroxy-3-prenylbenzoate synthase (277 aa).

This sequence belongs to the aldolase class II family. As to quaternary structure, homotetramer. It depends on Fe(2+) as a cofactor.

The enzyme catalyses 3-dimethylallyl-4-hydroxyphenylpyruvate + O2 = 3-dimethylallyl-4-hydroxymandelate + CO2. It carries out the reaction 3-dimethylallyl-4-hydroxymandelate + O2 = 3-dimethylallyl-4-hydroxybenzoate + CO2 + H2O. It functions in the pathway antibiotic biosynthesis. Activated by ascorbate. Its function is as follows. Involved in the biosynthesis of ring A of the aminocoumarin antibiotic clorobiocin. Catalyzes two consecutive oxidative decarboxylations of 3-dimethylallyl-4-hydroxyphenylpyruvate (3DMA-4HPP) to yield 3-dimethylallyl-4-hydroxybenzoate (3DMA-4HB) via the 3-dimethylallyl-4-hydroxymandelic acid (3DMA-4HMA) intermediate. In Streptomyces roseochromogenus subsp. oscitans, this protein is 4-hydroxy-3-prenylphenylpyruvate oxygenase/4-hydroxy-3-prenylbenzoate synthase.